Consider the following 578-residue polypeptide: GRAM domain-containing protein 4 (578 aa).

2 disordered regions span residues 23 to 58 and 136 to 159; these read ESPN…AGPG and TEEQ…ERRS. Residues S24 and S28 each carry the phosphoserine modification. Basic and acidic residues predominate over residues 44–53; that stretch reads SPRDSEELRD. Positions 83 to 143 form a coiled coil; that stretch reads HLEIALLEKH…ARTEEQMAQQ (61 aa). Helical transmembrane passes span 240–260, 334–354, and 356–376; these read VYMN…LAIL, ITQK…FFPY, and LVGL…DFIF. A disordered region spans residues 415-435; it reads QTTSSRSYVPSAPAGLGKEED. A GRAM domain is found at 445-523; it reads GNFHEIFNLT…VDITDIQKYK (79 aa).

In terms of assembly, interacts with RTN4 (isoform B). Expressed in lung and in primary lung squamous cell carcinoma (LSCC).

It localises to the mitochondrion membrane. Its subcellular location is the endoplasmic reticulum membrane. Plays a role as a mediator of E2F1-induced apoptosis in the absence of p53/TP53. Plays a role as a mediator of E2F1-induced apoptosis in the absence of p53/TP53. Inhibits TLR9 response to nucelic acids and regulates TLR9-mediated innate immune response. This is GRAM domain-containing protein 4 from Homo sapiens (Human).